The primary structure comprises 475 residues: F-box protein SKIP22 (475 aa).

The disordered stretch occupies residues 114–133 (DQAKSNPNTSVEDPEGDISG). An F-box domain is found at 319 to 365 (PPCLMRLPTELKLKILELLPGVSIGNMACVCTEMRYLASDNDLWKQK).

As to quaternary structure, part of a SCF (ASK-cullin-F-box) protein ligase complex. Interacts with SKP1A/ASK1 and SPK1B/ASK2.

The protein localises to the nucleus. It participates in protein modification; protein ubiquitination. Component of SCF(ASK-cullin-F-box) E3 ubiquitin ligase complexes, which may mediate the ubiquitination and subsequent proteasomal degradation of target proteins. This chain is F-box protein SKIP22 (SKIP22), found in Arabidopsis thaliana (Mouse-ear cress).